The chain runs to 944 residues: Trehalose monomycolate exporter MmpL3 (944 aa).

At 1–13 (MFAWWGRTVYRYR) the chain is on the cytoplasmic side. Residues 14–34 (FIVIGVMVALCLGGGVFGLSL) form a helical membrane-spanning segment. The Periplasmic portion of the chain corresponds to 35–185 (GKHVTQSGFY…TIATDQRRME (151 aa)). 40–44 (QSGFY) contacts a 1,2-diacylglycero-3-phosphoethanolamine. A helical transmembrane segment spans residues 186–206 (VLALPLVAVVLFFVFGGVIAA). Topologically, residues 207-209 (GLP) are cytoplasmic. Residues 210-230 (VMVGGLCIAGALGIMRFLAIF) form a helical membrane-spanning segment. The Periplasmic segment spans residues 231-235 (GPVHY). Residues 236–256 (FAQPVVSLIGLGIAIDYGLFI) traverse the membrane as a helical segment. At 257 to 286 (VSRFREEIAEGYDTETAVRRTVITAGRTVT) the chain is on the cytoplasmic side. The chain crosses the membrane as a helical span at residues 287–307 (FSAVLIVASAIGLLLFPQGFL). Over 308–314 (KSLTYAT) the chain is Periplasmic. A helical membrane pass occupies residues 315-335 (IASVMLSAILSITVLPACLGI). The Cytoplasmic segment spans residues 336-396 (LGKHVDALGV…KLVNRVMKRP (61 aa)). Residues 397-417 (VLFAAPIVIIMILLIIPVGKL) traverse the membrane as a helical segment. The Periplasmic portion of the chain corresponds to 418 to 562 (SLGGISEKYL…HGLFAKMPLM (145 aa)). A helical transmembrane segment spans residues 563–583 (VVILLTTTIVLMFLAFGSVVL). At 584 to 586 (PIK) the chain is on the cytoplasmic side. The helical transmembrane segment at 587-607 (ATLMSALTLGSTMGILTWIFV) threads the bilayer. At 608 to 616 (DGHFSKWLN) the chain is on the periplasmic side. The helical transmembrane segment at 617–637 (FTPTPLTAPVIGLIIALVFGL) threads the bilayer. Residues 638 to 672 (STDYEVFLVSRMVEARERGMSTQEAIRIGTAATGR) are Cytoplasmic-facing. The chain crosses the membrane as a helical span at residues 673–693 (IITAAALIVAVVAGAFVFSDL). Over 694 to 698 (VMMKY) the chain is Periplasmic. Residues 699–719 (LAFGLMAALLLDATVVRMFLV) traverse the membrane as a helical segment. The Cytoplasmic segment spans residues 720-944 (PSVMKLLGDD…QDLLRREGRL (225 aa)). The disordered stretch occupies residues 778 to 944 (AAGDPRPPHD…QDLLRREGRL (167 aa)). A compositionally biased stretch (low complexity) spans 791–828 (PLAESPRPARSSPASSPELTPALEATAAPAAPSGASTT). Residues 829–839 (RMQIGSSTEPP) show a composition bias toward polar residues. Residues 855 to 866 (STPPPTPTPPSA) show a composition bias toward pro residues.

This sequence belongs to the resistance-nodulation-cell division (RND) (TC 2.A.6) family. MmpL subfamily. As to quaternary structure, monomer. Interacts with TtfA (via N-terminus); active trehalose monomycolate (TMM) biosynthesis is not required for the complex formation.

The protein localises to the cell inner membrane. Its subcellular location is the cell septum. It localises to the cell tip. Its activity is regulated as follows. Inhibited by the antitubercular drug SQ109. Also inhibited by several other compounds such as the pyrrole derivative BM212, the adamantyl urea derivative AU1235, the benzimidazole C215, indoleamides, tetrahydropyrazolo[1,5-a]pyrimidine-3-carboxamide (THPP) and N-benzyl-6',7'-dihydrospiro[piperidine-4,4'-thieno[3,2-c]pyran] (Spiro) analogs. Inhibitory effects of these compounds, including SQ109, are most likely due to their ability to dissipate the transmembrane electrochemical proton gradient. Functionally, transports trehalose monomycolate (TMM) to the cell wall. Flips TMM across the inner membrane. Membrane potential is not required for this function. Transports probably phosphatidylethanolamine (PE) as well. Binds specifically both TMM and PE, but not trehalose dimycolate (TDM). Also binds diacylglycerol (DAG) and other phospholipids, including phosphatidylglycerol (PG), phosphatidylinositol (PI), and cardiolipin (CDL). Contributes to membrane potential, cell wall composition, antibiotic susceptibility and fitness. Could also be part of a heme-iron acquisition system. Is the target of the antitubercular drug SQ109. The sequence is that of Trehalose monomycolate exporter MmpL3 (mmpL3) from Mycobacterium tuberculosis (strain ATCC 25618 / H37Rv).